A 196-amino-acid polypeptide reads, in one-letter code: Imidazole glycerol phosphate synthase subunit HisH (196 aa).

Residues 2 to 196 enclose the Glutamine amidotransferase type-1 domain; sequence KVVILDTGCA…AQLLKNFLEM (195 aa). The active-site Nucleophile is the cysteine 77. Residues histidine 178 and glutamate 180 contribute to the active site.

In terms of assembly, heterodimer of HisH and HisF.

The protein localises to the cytoplasm. The catalysed reaction is 5-[(5-phospho-1-deoxy-D-ribulos-1-ylimino)methylamino]-1-(5-phospho-beta-D-ribosyl)imidazole-4-carboxamide + L-glutamine = D-erythro-1-(imidazol-4-yl)glycerol 3-phosphate + 5-amino-1-(5-phospho-beta-D-ribosyl)imidazole-4-carboxamide + L-glutamate + H(+). It catalyses the reaction L-glutamine + H2O = L-glutamate + NH4(+). Its pathway is amino-acid biosynthesis; L-histidine biosynthesis; L-histidine from 5-phospho-alpha-D-ribose 1-diphosphate: step 5/9. Its function is as follows. IGPS catalyzes the conversion of PRFAR and glutamine to IGP, AICAR and glutamate. The HisH subunit catalyzes the hydrolysis of glutamine to glutamate and ammonia as part of the synthesis of IGP and AICAR. The resulting ammonia molecule is channeled to the active site of HisF. The protein is Imidazole glycerol phosphate synthase subunit HisH of Pectobacterium atrosepticum (strain SCRI 1043 / ATCC BAA-672) (Erwinia carotovora subsp. atroseptica).